A 1003-amino-acid polypeptide reads, in one-letter code: MNGGNESSGADRAGGPVATSVPIGWQRCVREGAVLYISPSGTELSSLEQTRSYLLSDGTCKCGLECPLNVPKVFNFDPLAPVTPGGAGVGPASEEDMTKLCNHRRKAVAMATLYRSMETTCSHSSPGEGASPQMFHTVSPGPPSARPPCRVPPTTPLNGGPGSLPPEPPSVSQAFPTLAGPGGLFPPRLADPVPSGGSSSPRFLPRGNAPSPAPPPPPAISLNAPSYNWGAALRSSLVPSDLGSPPAPHASSSPPSDPPLFHCSDALTPPPLPPSNNLPAHPGPASQPPVSSATMHLPLVLGPLGGAPTVEGPGAPPFLASSLLSAAAKAQHPPLPPPSTLQGRRPRAQAPSASHSSSLRPSQRRPRRPPTVFRLLEGRGPQTPRRSRPRAPAPVPQPFSLPEPSQPILPSVLSLLGLPTPGPSHSDGSFNLLGSDAHLPPPPTLSSGSPPQPRHPIQPSLPGTTSGSLSSVPGAPAPPAASKAPVVPSPVLQSPSEGLGMGAGPACPLPPLAGGEAFPFPSPEQGLALSGAGFPGMLGALPLPLSLGQPPPSPLLNHSLFGVLTGGGGQPPPEPLLPPPGGPGPPLAPGEPEGPSLLVASLLPPPPSDLLPPPSAPPSNLLASFLPLLALGPTAGDGEGSAEGAGGPSGEPFSGLGDLSPLLFPPLSAPPTLIALNSALLAATLDPPSGTPPQPCVLSAPQPGPPTSSVTTATTDPGASSLGKAPSNSGRPPQLLSPLLGASLLGDLSSLTSSPGALPSLLQPPGPLLSGQLGLQLLPGGGAPPPLSEASSPLACLLQSLQIPPEQPEAPCLPPESPASALEPEPARPPLSALAPPHGSPDPPVPELLTGRGSGKRGRRGGGGLRGINGEARPARGRKPGSRREPGRLALKWGTRGGFNGQMERSPRRTHHWQHNGELAEGGAEPKDPPPPGPHSEDLKVPPGVVRKSRRGRRRKYNPTRNSNSSRQDITLEPSPTARAAVPLPPRARPGRPAKNKRRKLAP.

One can recognise an MBD domain in the interval 11–81 (DRAGGPVATS…KVFNFDPLAP (71 aa)). The segment at 57–68 (DGTCKCGLECPL) is required for interaction with ASXL1/2/3. Disordered regions lie at residues 120–219 (TCSH…PPPA), 238–664 (VPSD…PLLF), and 683–1003 (ATLD…KLAP). Pro residues-rich tracts occupy residues 140–155 (PGPPSARPPCRVPPTT) and 268–287 (TPPPLPPSNNLPAHPGPASQ). Low complexity-rich tracts occupy residues 297–308 (LPLVLGPLGGAP), 319–328 (LASSLLSAAA), and 348–361 (AQAPSASHSSSLRP). Residues 391–407 (APAPVPQPFSLPEPSQP) show a composition bias toward pro residues. The span at 408-426 (ILPSVLSLLGLPTPGPSHS) shows a compositional bias: low complexity. Over residues 439-456 (LPPPPTLSSGSPPQPRHP) the composition is skewed to pro residues. 2 stretches are compositionally biased toward low complexity: residues 460-498 (SLPGTTSGSLSSVPGAPAPPAASKAPVVPSPVLQSPSEG) and 531-548 (GAGFPGMLGALPLPLSLG). Pro residues predominate over residues 570 to 589 (QPPPEPLLPPPGGPGPPLAP). Low complexity predominate over residues 590-602 (GEPEGPSLLVASL). Over residues 603–617 (LPPPPSDLLPPPSAP) the composition is skewed to pro residues. A compositionally biased stretch (low complexity) spans 618–633 (PSNLLASFLPLLALGP). Residues 635-649 (AGDGEGSAEGAGGPS) show a composition bias toward gly residues. The span at 650–662 (GEPFSGLGDLSPL) shows a compositional bias: low complexity. Residues 707-718 (TSSVTTATTDPG) are compositionally biased toward polar residues. Low complexity-rich tracts occupy residues 732–761 (PPQLLSPLLGASLLGDLSSLTSSPGALPSL), 768–778 (LLSGQLGLQLL), and 788–798 (SEASSPLACLL). Positions 805–817 (PEQPEAPCLPPES) are enriched in pro residues. The segment covering 818–837 (PASALEPEPARPPLSALAPP) has biased composition (low complexity). A compositionally biased stretch (basic residues) spans 947–958 (RKSRRGRRRKYN). The span at 959 to 969 (PTRNSNSSRQD) shows a compositional bias: polar residues. Residues 989–1003 (RPGRPAKNKRRKLAP) are compositionally biased toward basic residues.

In terms of assembly, core component of the polycomb repressive deubiquitinase (PR-DUB) complex, at least composed of BAP1, one of ASXL1, ASXL2 or (probably) ASXL3, and one of MBD5 or MBD6. Distinct combinations of ASXL and MBD proteins may preferentially bind specific histone modification marks. The PR-DUB core associates with a number of accessory proteins, including FOXK1, FOXK2, KDM1B, HCFC1 and OGT; KDM1B specifically associates with ASXL2 PR-DUB complexes. Interacts (via MBD domain) with ASXL1, ASXL2 and ASXL3 (via PHD domain); the interaction is probably direct, mediates association with other PR-DUB complex core components.

The protein localises to the nucleus. Its subcellular location is the chromosome. Its function is as follows. Non-catalytic component of the polycomb repressive deubiquitinase (PR-DUB) complex, a complex that specifically mediates deubiquitination of histone H2A monoubiquitinated at 'Lys-120' (H2AK119ub1). Important for stability of PR-DUB components and stimulating its ubiquitinase activity. As part of the PR-DUB complex, associates with chromatin enriched in histone marks H3K4me1, H3K4me3, and H3K27Ac, but not in H3K27me3. MBD5 and MBD6 containing complexes associate with distinct chromatin regions enriched in genes involved in different pathways. Heterochromatin recruitment is not mediated by DNA methylation. The PR-DUB complex is an epigenetic regulator of gene expression, including genes involved in development, cell communication, signaling, cell proliferation and cell viability; may promote cancer cell growth. This Homo sapiens (Human) protein is Methyl-CpG-binding domain protein 6 (MBD6).